Reading from the N-terminus, the 264-residue chain is Agamous-like MADS-box protein AGL61 (264 aa).

Residues 62–122 (IGRQKIPMVK…KKPFSFGHPS (61 aa)) form the MADS-box domain.

As to quaternary structure, interacts with PHE1/AGL37, PHE2/AGL38, AGL80 and AGL86. Forms a heterodimer with AGL80. In terms of tissue distribution, expressed exclusively in the central cell of the female gametophyte and in early endosperm.

It localises to the nucleus. Probable transcription factor. Controls central cell differentiation during female gametophyte development. The polypeptide is Agamous-like MADS-box protein AGL61 (AGL61) (Arabidopsis thaliana (Mouse-ear cress)).